A 553-amino-acid polypeptide reads, in one-letter code: CTP synthase (553 aa).

An amidoligase domain region spans residues 1–275; that stretch reads MPTETEYDPS…DQYVMEQFDM (275 aa). S24 provides a ligand contact to CTP. UTP is bound at residue S24. ATP is bound at residue 25 to 30; it reads GLGKGI. Y65 is an L-glutamine binding site. Residue D82 coordinates ATP. Mg(2+) contacts are provided by D82 and E150. CTP is bound by residues 157–159, 196–201, and K232; these read DIE and KTKPTQ. UTP contacts are provided by residues 196–201 and K232; that span reads KTKPTQ. Positions 308–540 constitute a Glutamine amidotransferase type-1 domain; sequence KYALEDAYMS…LDAVLERADV (233 aa). Residue G362 coordinates L-glutamine. C389 serves as the catalytic Nucleophile; for glutamine hydrolysis. L-glutamine is bound by residues 390–393, E413, and R470; that span reads LGFQ. Catalysis depends on residues H513 and E515.

The protein belongs to the CTP synthase family. Homotetramer.

The catalysed reaction is UTP + L-glutamine + ATP + H2O = CTP + L-glutamate + ADP + phosphate + 2 H(+). It catalyses the reaction L-glutamine + H2O = L-glutamate + NH4(+). It carries out the reaction UTP + NH4(+) + ATP = CTP + ADP + phosphate + 2 H(+). It functions in the pathway pyrimidine metabolism; CTP biosynthesis via de novo pathway; CTP from UDP: step 2/2. With respect to regulation, allosterically activated by GTP, when glutamine is the substrate; GTP has no effect on the reaction when ammonia is the substrate. The allosteric effector GTP functions by stabilizing the protein conformation that binds the tetrahedral intermediate(s) formed during glutamine hydrolysis. Inhibited by the product CTP, via allosteric rather than competitive inhibition. Functionally, catalyzes the ATP-dependent amination of UTP to CTP with either L-glutamine or ammonia as the source of nitrogen. Regulates intracellular CTP levels through interactions with the four ribonucleotide triphosphates. The chain is CTP synthase from Halobacterium salinarum (strain ATCC 29341 / DSM 671 / R1).